The primary structure comprises 695 residues: Elongation factor G (695 aa).

The tr-type G domain maps to 8–282 (KDTRNIGIMA…AIVDYMPAPI (275 aa)). Residues 17–24 (AHIDAGKT), 81–85 (DTPGH), and 135–138 (NKMD) each bind GTP. The interval 285–304 (PDIKGVDPQTDEPTTRKSSD) is disordered.

Belongs to the TRAFAC class translation factor GTPase superfamily. Classic translation factor GTPase family. EF-G/EF-2 subfamily.

The protein localises to the cytoplasm. In terms of biological role, catalyzes the GTP-dependent ribosomal translocation step during translation elongation. During this step, the ribosome changes from the pre-translocational (PRE) to the post-translocational (POST) state as the newly formed A-site-bound peptidyl-tRNA and P-site-bound deacylated tRNA move to the P and E sites, respectively. Catalyzes the coordinated movement of the two tRNA molecules, the mRNA and conformational changes in the ribosome. This Finegoldia magna (strain ATCC 29328 / DSM 20472 / WAL 2508) (Peptostreptococcus magnus) protein is Elongation factor G.